Consider the following 103-residue polypeptide: MSGRGKGGKGLGKGGAKRHRKILRDNIQGITKPAIRRLARRGGVKRISGLIYEETRSVLKVFLENVIRDAVTYTEHAKRKTVTSLDVVYALKRQGRTLYGFGG.

Lysine 6 is modified (N6-acetyl-N6-methyllysine; alternate). 3 positions are modified to N6-methyllysine; alternate: lysine 6, lysine 9, and lysine 13. Residue lysine 13 is modified to N6-acetyl-N6-methyllysine; alternate. The DNA-binding element occupies 17–21; sequence KRHRK. Lysine 92 carries the N6-glutaryllysine modification.

This sequence belongs to the histone H4 family. The nucleosome is a histone octamer containing two molecules each of H2A, H2B, H3 and H4 assembled in one H3-H4 heterotetramer and two H2A-H2B heterodimers. The octamer wraps approximately 147 bp of DNA. Glutarylation at Lys-92 (H4K91glu) destabilizes nucleosomes by promoting dissociation of the H2A-H2B dimers from nucleosomes.

Its subcellular location is the nucleus. It is found in the chromosome. In terms of biological role, core component of nucleosome. Nucleosomes wrap and compact DNA into chromatin, limiting DNA accessibility to the cellular machineries which require DNA as a template. Histones thereby play a central role in transcription regulation, DNA repair, DNA replication and chromosomal stability. DNA accessibility is regulated via a complex set of post-translational modifications of histones, also called histone code, and nucleosome remodeling. This chain is Histone H4 (H4.1), found in Mortierella alpina (Oleaginous fungus).